Consider the following 76-residue polypeptide: Sec-independent protein translocase protein TatA (76 aa).

The helical transmembrane segment at 1–21 threads the bilayer; it reads MLGGLTGWHLLIILAVILLLF. Positions 44–57 are enriched in basic and acidic residues; that stretch reads VNEMKKDGDKDKGE. Residues 44 to 76 form a disordered region; the sequence is VNEMKKDGDKDKGEGGSTAPATDTGASSEQNSK. The segment covering 62 to 76 has biased composition (polar residues); it reads APATDTGASSEQNSK.

The protein belongs to the TatA/E family. In terms of assembly, the Tat system comprises two distinct complexes: a TatABC complex, containing multiple copies of TatA, TatB and TatC subunits, and a separate TatA complex, containing only TatA subunits. Substrates initially bind to the TatABC complex, which probably triggers association of the separate TatA complex to form the active translocon.

Its subcellular location is the cell membrane. Part of the twin-arginine translocation (Tat) system that transports large folded proteins containing a characteristic twin-arginine motif in their signal peptide across membranes. TatA could form the protein-conducting channel of the Tat system. In Leifsonia xyli subsp. xyli (strain CTCB07), this protein is Sec-independent protein translocase protein TatA.